Consider the following 151-residue polypeptide: Small ribosomal subunit protein uS15 (151 aa).

It belongs to the universal ribosomal protein uS15 family.

The chain is Small ribosomal subunit protein uS15 (RpS13) from Spodoptera frugiperda (Fall armyworm).